A 372-amino-acid chain; its full sequence is Flagellar P-ring protein (372 aa).

Positions 1–26 are cleaved as a signal peptide; the sequence is MNLSSLPHRLLAAAVALCAIAAPASA.

This sequence belongs to the FlgI family. As to quaternary structure, the basal body constitutes a major portion of the flagellar organelle and consists of four rings (L,P,S, and M) mounted on a central rod.

It localises to the periplasm. The protein localises to the bacterial flagellum basal body. Assembles around the rod to form the L-ring and probably protects the motor/basal body from shearing forces during rotation. This is Flagellar P-ring protein from Xanthomonas campestris pv. campestris (strain ATCC 33913 / DSM 3586 / NCPPB 528 / LMG 568 / P 25).